Consider the following 360-residue polypeptide: G-box-binding factor 2 (360 aa).

The segment covering 1 to 16 (MGSNEEGNPTNNSDKP) has biased composition (polar residues). Disordered stretches follow at residues 1–26 (MGSNEEGNPTNNSDKPSQAAAPEQSN) and 150–275 (KVGS…AETE). Over residues 164–184 (SQSSENDGSSNGSDGNTTGGE) the composition is skewed to low complexity. A compositionally biased stretch (polar residues) spans 198–208 (TGERPSSQNSL). Over residues 246–264 (NEKEVKREKRKQSNRESAR) the composition is skewed to basic and acidic residues. The bZIP domain occupies 249–312 (EVKREKRKQS…EKLRLENEAI (64 aa)). A basic motif region spans residues 251–270 (KREKRKQSNRESARRSRLRK). Positions 277–312 (LSVKVDALVAENMSLRSKLGQLNNESEKLRLENEAI) are leucine-zipper. Polar residues predominate over residues 335 to 352 (NSVSGSKTVQHQLLNASP). A disordered region spans residues 335-360 (NSVSGSKTVQHQLLNASPITDPVAAS).

It belongs to the bZIP family. As to quaternary structure, DNA-binding heterodimer. Interacts with GBF4. Interacts with BZIP16 and BZIP68. In terms of tissue distribution, found in both light and dark grown leaves.

It is found in the nucleus. Functionally, binds to the G-box motif (5'-CCACGTGG-3') of the rbcS-1A gene promoter. G-box and G-box-like motifs are cis-acting elements defined in promoters of certain plant genes which are regulated by such diverse stimuli as light-induction or hormone control. GBF2 is found to bind asymmetrically to the G-box. The chain is G-box-binding factor 2 (GBF2) from Arabidopsis thaliana (Mouse-ear cress).